We begin with the raw amino-acid sequence, 64 residues long: Prokaryotic ubiquitin-like protein Pup (64 aa).

Positions 1-37 are disordered; it reads MAQEQTKRGGGGGEDDDLTGSTAAGQERREKLTDETD. The interval 21-58 is ARC ATPase binding; sequence STAAGQERREKLTDETDDLLDEIDDVLEENAEDFVRAY. The stretch at 23–52 forms a coiled coil; that stretch reads AAGQERREKLTDETDDLLDEIDDVLEENAE. Position 64 is a deamidated glutamine (Gln64). Residue Gln64 forms an Isoglutamyl lysine isopeptide (Gln-Lys) (interchain with K-? in acceptor proteins) linkage.

Belongs to the prokaryotic ubiquitin-like protein family. As to quaternary structure, strongly interacts with the proteasome-associated ATPase ARC through a hydrophobic interface; the interacting region of Pup lies in its C-terminal half. There is one Pup binding site per ARC hexamer ring. Post-translationally, is modified by deamidation of its C-terminal glutamine to glutamate by the deamidase Dop, a prerequisite to the subsequent pupylation process.

The protein operates within protein degradation; proteasomal Pup-dependent pathway. Its function is as follows. Protein modifier that is covalently attached to lysine residues of substrate proteins, thereby targeting them for proteasomal degradation. The tagging system is termed pupylation. This Mycolicibacterium vanbaalenii (strain DSM 7251 / JCM 13017 / BCRC 16820 / KCTC 9966 / NRRL B-24157 / PYR-1) (Mycobacterium vanbaalenii) protein is Prokaryotic ubiquitin-like protein Pup.